The chain runs to 65 residues: Large ribosomal subunit protein bL35 (65 aa).

It belongs to the bacterial ribosomal protein bL35 family.

This Yersinia enterocolitica serotype O:8 / biotype 1B (strain NCTC 13174 / 8081) protein is Large ribosomal subunit protein bL35.